Here is a 1050-residue protein sequence, read N- to C-terminus: Zinc finger and BTB domain-containing protein 11 (1050 aa).

Over residues 143 to 156 (LDSGEESNESEDDL) the composition is skewed to acidic residues. Residues 143-173 (LDSGEESNESEDDLSNFTSPPSTASKSSKKK) are disordered. Low complexity predominate over residues 157-168 (SNFTSPPSTASK). The BTB domain maps to 214-282 (CDVTLLIEGE…AYTSVLSFDF (69 aa)). 2 disordered regions span residues 373-514 (AEQN…EGGY) and 543-563 (LVQRGKKMKQPKRDAKESTEE). A compositionally biased stretch (low complexity) spans 378–399 (EPEQQPAPQASPEAEASVSPVE). Basic and acidic residues-rich tracts occupy residues 478 to 501 (SKDEDTLTEATEKTDSGPDDDTYR) and 553 to 563 (PKRDAKESTEE). 2 consecutive C2H2-type zinc fingers follow at residues 566–588 (HKCGECGMVFPRRYAFIMHTLKH) and 594–616 (YKCPLCKKQFQYSASLRAHLIRH). The segment at 617-641 (TRKEAPTSSSSNSTSTEASGGSSEK) is disordered. Low complexity predominate over residues 623-638 (TSSSSNSTSTEASGGS). 10 consecutive C2H2-type zinc fingers follow at residues 648–670 (FICSICGRTLPKLYSLRIHMLKH), 676–698 (HACQVCGKTFIYKHGLKLHQSLH), 704–726 (FQCELCVKSFVTKRSLQEHMSIH), 732–754 (YFCSICGKSFHRGSGLSKHLKKH), 763–785 (YHCTQCEKSFFEARDLRQHMNKH), 791–813 (FQCQFCDKCYSWKKDWYSHVKSH), 819–843 (YRCNICGKEFYEKALFRRHVKKATH), 855–877 (RVCDQCGRKFTQLREYRRHMNNH), 883–905 (FECLTCGVAWADARSLKRHVRTH), and 911–934 (YVCPVCSEAYIDARTLRKHMTKFH).

The protein localises to the nucleus. It is found in the nucleolus. Its function is as follows. May be involved in transcriptional regulation. The polypeptide is Zinc finger and BTB domain-containing protein 11 (Mus musculus (Mouse)).